Here is a 262-residue protein sequence, read N- to C-terminus: Tryptophan synthase alpha chain (262 aa).

Active-site proton acceptor residues include glutamate 47 and aspartate 58.

This sequence belongs to the TrpA family. Tetramer of two alpha and two beta chains.

It carries out the reaction (1S,2R)-1-C-(indol-3-yl)glycerol 3-phosphate + L-serine = D-glyceraldehyde 3-phosphate + L-tryptophan + H2O. It functions in the pathway amino-acid biosynthesis; L-tryptophan biosynthesis; L-tryptophan from chorismate: step 5/5. In terms of biological role, the alpha subunit is responsible for the aldol cleavage of indoleglycerol phosphate to indole and glyceraldehyde 3-phosphate. The sequence is that of Tryptophan synthase alpha chain from Chromobacterium violaceum (strain ATCC 12472 / DSM 30191 / JCM 1249 / CCUG 213 / NBRC 12614 / NCIMB 9131 / NCTC 9757 / MK).